A 367-amino-acid polypeptide reads, in one-letter code: Alanine racemase (367 aa).

The active-site Proton acceptor; specific for D-alanine is Lys-40. Residue Lys-40 is modified to N6-(pyridoxal phosphate)lysine. Substrate is bound at residue Arg-136. Tyr-263 acts as the Proton acceptor; specific for L-alanine in catalysis. Residue Met-310 participates in substrate binding.

Belongs to the alanine racemase family. The cofactor is pyridoxal 5'-phosphate.

The catalysed reaction is L-alanine = D-alanine. The protein operates within amino-acid biosynthesis; D-alanine biosynthesis; D-alanine from L-alanine: step 1/1. Catalyzes the interconversion of L-alanine and D-alanine. May also act on other amino acids. This Streptococcus pneumoniae serotype 19F (strain G54) protein is Alanine racemase (alr).